Reading from the N-terminus, the 458-residue chain is MKKQNPWIYLNEEEKNQILNFSESYKKFISKFKTEREVTAYALDKAKKLGFINAEEKKNLMPGDKIFYTCREKSVAFAIIGKNPIEDGMNFIVSHTDSPRLDAKPSPISEENELTFIKTNYYGGIKKYQWLSTPLSIRGVVFLKNGEKVEINIGDNENDPVFVIPDILPHLDRKIQRNKKSDEIVEGENLKILIGSLPIETKEKNKVKLATLQLIKEKYKIEEEDFVSSEIEIVPAGTAKDVGFDKALIGAYGQDDKICVFTSLESIFDLEETPNKTAICFLVDKEEIGSTGSTGLDSRYLEYFVSDMIFKIKKSEYNNLHVQKALWNSKSISADVCAAINPLFSSVHDEQNAPQLGYGIPIMKYTGHGGKSMASDADAELVSYIRQLLNKNNIAWQVATLGKVEEGGGGTVAKFLAGYGIRTIDMGPAVISMHSPMEITSKFDLYNAYLAYKAFYRE.

Zn(2+)-binding residues include H95, H170, and H434.

The protein belongs to the peptidase M18 family. The cofactor is Zn(2+).

The sequence is that of Probable M18 family aminopeptidase 1 (apeA) from Borreliella burgdorferi (strain ATCC 35210 / DSM 4680 / CIP 102532 / B31) (Borrelia burgdorferi).